The primary structure comprises 358 residues: Sulfate/thiosulfate import ATP-binding protein CysA 1 (358 aa).

The ABC transporter domain maps to 3-237 (IQVENIRKAF…PASAFVYGFL (235 aa)). 35–42 (GPSGCGKT) is a binding site for ATP.

The protein belongs to the ABC transporter superfamily. Sulfate/tungstate importer (TC 3.A.1.6) family. As to quaternary structure, the complex is composed of two ATP-binding proteins (CysA), two transmembrane proteins (CysT and CysW) and a solute-binding protein (CysP).

The protein resides in the cell inner membrane. The catalysed reaction is sulfate(out) + ATP + H2O = sulfate(in) + ADP + phosphate + H(+). It carries out the reaction thiosulfate(out) + ATP + H2O = thiosulfate(in) + ADP + phosphate + H(+). Its function is as follows. Part of the ABC transporter complex CysAWTP involved in sulfate/thiosulfate import. Responsible for energy coupling to the transport system. In Chromobacterium violaceum (strain ATCC 12472 / DSM 30191 / JCM 1249 / CCUG 213 / NBRC 12614 / NCIMB 9131 / NCTC 9757 / MK), this protein is Sulfate/thiosulfate import ATP-binding protein CysA 1.